Consider the following 440-residue polypeptide: Lipopolysaccharide-processing protein LpsZ (440 aa).

It to E.coli capsule polysaccharide export protein KpsC.

Its subcellular location is the cytoplasm. Involved in the invasion of nitrogen fixation nodules. May be involved in the biosynthesis of lipopolysaccharides as an enzyme or a regulatory protein. This is Lipopolysaccharide-processing protein LpsZ (lpsZ) from Rhizobium meliloti (Ensifer meliloti).